The sequence spans 553 residues: Glucose-6-phosphate isomerase (553 aa).

Glu357 (proton donor) is an active-site residue. Residues His388 and Lys514 contribute to the active site. Positions 527–553 (ADSPAAQSDSSTDALVRRYRTERGRTA) are disordered. The segment covering 541–553 (LVRRYRTERGRTA) has biased composition (basic and acidic residues).

Belongs to the GPI family.

It is found in the cytoplasm. The enzyme catalyses alpha-D-glucose 6-phosphate = beta-D-fructose 6-phosphate. It functions in the pathway carbohydrate biosynthesis; gluconeogenesis. The protein operates within carbohydrate degradation; glycolysis; D-glyceraldehyde 3-phosphate and glycerone phosphate from D-glucose: step 2/4. Catalyzes the reversible isomerization of glucose-6-phosphate to fructose-6-phosphate. The chain is Glucose-6-phosphate isomerase from Mycolicibacterium vanbaalenii (strain DSM 7251 / JCM 13017 / BCRC 16820 / KCTC 9966 / NRRL B-24157 / PYR-1) (Mycobacterium vanbaalenii).